Consider the following 221-residue polypeptide: uncharacterized protein (221 aa).

The signal sequence occupies residues 1–30; the sequence is MAKFNNNILLIILIIVILFIIFYFLNKNNQ.

Its subcellular location is the virion. This is an uncharacterized protein from Acanthamoeba polyphaga mimivirus (APMV).